Reading from the N-terminus, the 363-residue chain is Fructose-bisphosphate aldolase 2 (363 aa).

S61 serves as a coordination point for D-glyceraldehyde 3-phosphate. D109 (proton donor) is an active-site residue. Positions 110, 144, 174, and 226 each coordinate Zn(2+). G227 is a binding site for dihydroxyacetone phosphate. H264 provides a ligand contact to Zn(2+). G265–S267 is a dihydroxyacetone phosphate binding site.

This sequence belongs to the class II fructose-bisphosphate aldolase family. As to quaternary structure, homodimer. The cofactor is Zn(2+).

The catalysed reaction is beta-D-fructose 1,6-bisphosphate = D-glyceraldehyde 3-phosphate + dihydroxyacetone phosphate. Its pathway is carbohydrate degradation; glycolysis; D-glyceraldehyde 3-phosphate and glycerone phosphate from D-glucose: step 4/4. In terms of biological role, catalyzes the aldol condensation of dihydroxyacetone phosphate (DHAP or glycerone-phosphate) with glyceraldehyde 3-phosphate (G3P) to form fructose 1,6-bisphosphate (FBP) in gluconeogenesis and the reverse reaction in glycolysis. The sequence is that of Fructose-bisphosphate aldolase 2 (FBA2) from Paracoccidioides lutzii (strain ATCC MYA-826 / Pb01) (Paracoccidioides brasiliensis).